We begin with the raw amino-acid sequence, 233 residues long: Chaperone protein MrkB (233 aa).

Positions 1–18 are cleaved as a signal peptide; it reads MKRIALFFCFIFSFAAHA.

The protein belongs to the periplasmic pilus chaperone family.

The protein localises to the periplasm. Mediates assembly of pili by forming soluble multimeric complexes with pili subunits as an intermediate step in the assembly process. This protein is involved in type 3 pili assembly. This Klebsiella pneumoniae protein is Chaperone protein MrkB (mrkB).